The sequence spans 481 residues: ATP synthase subunit beta, chloroplastic (481 aa).

161-168 (GGAGVGKT) provides a ligand contact to ATP.

This sequence belongs to the ATPase alpha/beta chains family. F-type ATPases have 2 components, CF(1) - the catalytic core - and CF(0) - the membrane proton channel. CF(1) has five subunits: alpha(3), beta(3), gamma(1), delta(1), epsilon(1). CF(0) has four main subunits: a(1), b(1), b'(1) and c(9-12).

It is found in the plastid. The protein resides in the chloroplast thylakoid membrane. It carries out the reaction ATP + H2O + 4 H(+)(in) = ADP + phosphate + 5 H(+)(out). In terms of biological role, produces ATP from ADP in the presence of a proton gradient across the membrane. The catalytic sites are hosted primarily by the beta subunits. The sequence is that of ATP synthase subunit beta, chloroplastic from Pylaiella littoralis (Seaweed).